Consider the following 614-residue polypeptide: Probable indole-3-acetic acid-amido synthetase GH3.2 (614 aa).

Belongs to the IAA-amido conjugating enzyme family. As to expression, expressed in roots, flowers and callus.

Its function is as follows. May catalyze the synthesis of indole-3-acetic acid (IAA)-amino acid conjugates, providing a mechanism for the plant to cope with the presence of excess auxin. The chain is Probable indole-3-acetic acid-amido synthetase GH3.2 (GH3.2) from Oryza sativa subsp. japonica (Rice).